A 418-amino-acid polypeptide reads, in one-letter code: Tyrosine--tRNA ligase (418 aa).

An L-tyrosine-binding site is contributed by Tyr38. Residues 43–52 (CTARSLHIGS) carry the 'HIGH' region motif. Tyr175 and Gln179 together coordinate L-tyrosine. The short motif at 235 to 239 (KMGKT) is the 'KMSKS' region element. Lys238 is a binding site for ATP. One can recognise an S4 RNA-binding domain in the interval 348 to 413 (LSVVKLLQVS…CGKKRHLKVV (66 aa)).

Belongs to the class-I aminoacyl-tRNA synthetase family. TyrS type 1 subfamily. In terms of assembly, homodimer.

The protein resides in the cytoplasm. It catalyses the reaction tRNA(Tyr) + L-tyrosine + ATP = L-tyrosyl-tRNA(Tyr) + AMP + diphosphate + H(+). Catalyzes the attachment of tyrosine to tRNA(Tyr) in a two-step reaction: tyrosine is first activated by ATP to form Tyr-AMP and then transferred to the acceptor end of tRNA(Tyr). This is Tyrosine--tRNA ligase from Ehrlichia ruminantium (strain Welgevonden).